The following is a 31-amino-acid chain: Photosystem II reaction center protein T (31 aa).

Residues S3–F23 traverse the membrane as a helical segment.

The protein belongs to the PsbT family. As to quaternary structure, PSII is composed of 1 copy each of membrane proteins PsbA, PsbB, PsbC, PsbD, PsbE, PsbF, PsbH, PsbI, PsbJ, PsbK, PsbL, PsbM, PsbT, PsbX, PsbY, PsbZ, Psb30/Ycf12, peripheral proteins PsbO, CyanoQ (PsbQ), PsbU, PsbV and a large number of cofactors. It forms dimeric complexes.

It is found in the cellular thylakoid membrane. In terms of biological role, found at the monomer-monomer interface of the photosystem II (PS II) dimer, plays a role in assembly and dimerization of PSII. PSII is a light-driven water plastoquinone oxidoreductase, using light energy to abstract electrons from H(2)O, generating a proton gradient subsequently used for ATP formation. This chain is Photosystem II reaction center protein T, found in Microcystis aeruginosa (strain NIES-843 / IAM M-2473).